We begin with the raw amino-acid sequence, 147 residues long: MIYWIFLGLAIIAEIIGTLSMKYASVSGEMTGHVVMYFMITGSYVMLSLAVKKVALGVAYALWEGIGILIITIFSVMWFGETLSPLKIAGLVTLIGGILLVKSGTRKPKQPNRHRGNRPPSVQGLKTQTTGHHKGVAVESGEHHAAA.

The next 4 membrane-spanning stretches (helical) occupy residues 1 to 21, 31 to 51, 54 to 74, and 81 to 101; these read MIYWIFLGLAIIAEIIGTLSM, TGHVVMYFMITGSYVMLSLAV, VALGVAYALWEGIGILIITIF, and ETLSPLKIAGLVTLIGGILLV. Basic residues predominate over residues 105–117; it reads TRKPKQPNRHRGN. Residues 105–147 form a disordered region; that stretch reads TRKPKQPNRHRGNRPPSVQGLKTQTTGHHKGVAVESGEHHAAA.

Belongs to the drug/metabolite transporter (DMT) superfamily. Small multidrug resistance (SMR) (TC 2.A.7.1) family. MdtJ subfamily. As to quaternary structure, forms a complex with MdtI.

The protein resides in the cell inner membrane. Functionally, catalyzes the excretion of spermidine. This chain is Spermidine export protein MdtJ, found in Yersinia pseudotuberculosis serotype IB (strain PB1/+).